The sequence spans 2475 residues: Polyprotein pp220 (2475 aa).

Gly2 carries N-myristoyl glycine; by host lipidation. The stretch at 2185-2212 forms a coiled coil; it reads KNQLIADLAAIREQLVRMRREVENMVQT.

This sequence belongs to the asfivirus polyprotein pp220 family. Post-translationally, the polyprotein is not glycosylated. Specific enzymatic cleavages in vivo by the viral pS273R protease yield mature proteins.

The protein resides in the host cytoplasm. The protein localises to the host perinuclear region. It localises to the virion. It is found in the host nucleus. Its function is as follows. Essential for the core assembly. Its myristoyl moiety may function as a membrane-anchoring signal to bind the developing core shell to the inner viral envelope. The structural protein p34 is a component of the virus core shell. In terms of biological role, the structural protein p14 is a component of the virus core shell. Functionally, the structural protein p37 is a component of the virus core shell. Its function is as follows. The structural protein p150 is a component of the virus core shell. The chain is Polyprotein pp220 from African swine fever virus (isolate Pig/Kenya/KEN-50/1950) (ASFV).